The primary structure comprises 465 residues: Cysteine--tRNA ligase (465 aa).

Residue C30 participates in Zn(2+) binding. Residues M32–H42 carry the 'HIGH' region motif. Zn(2+) contacts are provided by C214, H239, and E243. The 'KMSKS' region motif lies at K271 to S275. K274 lines the ATP pocket.

The protein belongs to the class-I aminoacyl-tRNA synthetase family. In terms of assembly, monomer. Zn(2+) is required as a cofactor.

It localises to the cytoplasm. It carries out the reaction tRNA(Cys) + L-cysteine + ATP = L-cysteinyl-tRNA(Cys) + AMP + diphosphate. This chain is Cysteine--tRNA ligase, found in Paraburkholderia xenovorans (strain LB400).